The chain runs to 745 residues: MAGSRRLAHFFMASCLFLCYTASVNGGKRGNSDKCSYKQGTQTSSMDEGARKLGVTFRYDNCSVNWSPLGKHAIHEVNNISFSHLSCDSQAAVVVHWMASPLGIEHVKGFRVYLEDKNPERKQCQHLILKDPRQLNFSYKTIRMSSQPFSSLAFETDYMVRIVPFPTFLNDSFFPPSFLRTNSCEVLLGPDNLVCKPFWKPKMLNVSQLGSNLHVVFDHAPSTFGFSIYYLYYKLRQEGPFRLKRCKPEQNGPKTTCVLQDVTPGTYAIELRDDSNNTRRQTQYHVSQVHSPWAGPIRAMAITVPLVIMSAFATLFTVMCRKKQQENIYSHLDEESSESSSQTTALSADRPWPRPKIFICYSSRDGAKHLAVIQSFAFFLQDFCGCEVSLDLWEHLEICKEGQMSWLSRRIDEAHFIITVCSKGLKHFVEKRHRKGKATSKEKNREPSASDSSSSSRDLFIVASAIISEKLKEVHQKSSDLSRFMSVYFDYSHETDVPTSLSLAPKFKLMDQLPQLFARLHSRQLSLTDREPQPPNVSKRNYFCSKSGRSLYVAIYNMHQHVTQEPDWLEKELMPPPLPNKRTIPEKVDSGLVLNEVKLKHGSESECPPVRSNVLILPQTPQVGVSLSLSREDLGEGSSSQDAGSCRPVLHTDGSASPPEMPRDSGIYDSSVPSSELSIPLMDGLSPDHADNSSLADSVSSSSGLGDEEPPAVSSLHCTAHTICKADLHHQHLHPSEGLIAAAST.

The first 26 residues, 1 to 26 (MAGSRRLAHFFMASCLFLCYTASVNG), serve as a signal peptide directing secretion. Residues 27–298 (GKRGNSDKCS…VHSPWAGPIR (272 aa)) lie on the Extracellular side of the membrane. N-linked (GlcNAc...) asparagine glycans are attached at residues Asn-61, Asn-79, Asn-136, Asn-170, Asn-205, and Asn-276. The chain crosses the membrane as a helical span at residues 299-319 (AMAITVPLVIMSAFATLFTVM). Over 320–745 (CRKKQQENIY…SEGLIAAAST (426 aa)) the chain is Cytoplasmic. Residues 354 to 518 (RPKIFICYSS…LMDQLPQLFA (165 aa)) form the SEFIR domain. Disordered stretches follow at residues 432 to 454 (RHRKGKATSKEKNREPSASDSSS) and 631 to 713 (REDL…PPAV). A compositionally biased stretch (basic and acidic residues) spans 439-448 (TSKEKNREPS). The span at 693–705 (SSLADSVSSSSGL) shows a compositional bias: low complexity.

As to quaternary structure, interacts with fgfr1 and fgfr2.

The protein resides in the membrane. Functionally, feedback inhibitor of fibroblast growth factor mediated Ras-MAPK signaling and ERK activation. May inhibit FGF-induced FGFR1 tyrosine phosphorylation. This is Interleukin-17 receptor D (il17rd) from Danio rerio (Zebrafish).